A 355-amino-acid polypeptide reads, in one-letter code: Ferrochelatase (355 aa).

Positions 214 and 295 each coordinate Fe cation.

Belongs to the ferrochelatase family.

The protein resides in the cytoplasm. The enzyme catalyses heme b + 2 H(+) = protoporphyrin IX + Fe(2+). It participates in porphyrin-containing compound metabolism; protoheme biosynthesis; protoheme from protoporphyrin-IX: step 1/1. Its function is as follows. Catalyzes the ferrous insertion into protoporphyrin IX. This is Ferrochelatase from Burkholderia thailandensis (strain ATCC 700388 / DSM 13276 / CCUG 48851 / CIP 106301 / E264).